Here is a 93-residue protein sequence, read N- to C-terminus: Ferredoxin-2 (93 aa).

The 2Fe-2S ferredoxin-type domain occupies 2–91 (YKVTLKTPDG…DVVIETHKED (90 aa)). [2Fe-2S] cluster is bound by residues Cys37, Cys42, Cys45, and Cys75.

This sequence belongs to the 2Fe2S plant-type ferredoxin family. The cofactor is [2Fe-2S] cluster.

The protein localises to the plastid. Its subcellular location is the chloroplast. Its function is as follows. Ferredoxins are iron-sulfur proteins that transfer electrons in a wide variety of metabolic reactions. This is Ferredoxin-2 from Equisetum arvense (Field horsetail).